A 41-amino-acid chain; its full sequence is Large ribosomal subunit protein bL36 (41 aa).

This sequence belongs to the bacterial ribosomal protein bL36 family.

This Cereibacter sphaeroides (strain ATCC 17029 / ATH 2.4.9) (Rhodobacter sphaeroides) protein is Large ribosomal subunit protein bL36.